Here is a 447-residue protein sequence, read N- to C-terminus: MKRSLHSKEVANLSDVIKIDKLPEKAIIPMRQHDGIACAPLVKKGAEVIVGQKLGECEGSDLAYVHSPFCGTVNSIELMPNPSGKRILSVVLTPSECAQTVDFVPEKDAPPSRLIEIIKEAGIVEYYEKPTYLALKPGKRIDTLLMNATFPLITHAYLSSLDKVLEGFKLMLEASGISRGVIVLRADDKESIKAFKNAKVDGKPLTVAPIVGMRHADYYLEDVEDQIIVVAAGKITYTPTMMNLLSANVMGRKLPLGYEPPDVHVVVCGVKSAKAVYDAINEGKPYLESAVTVTGAVNNPKTVIVKFGTPIKDVIEACGGYKGEPGKVIVNGSMGGVAVYTDEAPVVKNTVGIVVQTEAEVLRDEATVCIHCARCVDVCPMNLLPGRIAAMADMGMFDRCREYFALNCIECGECAVVCPAKRHLVQLIRYSKLQIMNQKNETVEATE.

2 4Fe-4S ferredoxin-type domains span residues 359–389 (AEVLRDEATVCIHCARCVDVCPMNLLPGRIA) and 399–430 (RCREYFALNCIECGECAVVCPAKRHLVQLIRY). 8 residues coordinate [4Fe-4S] cluster: C369, C372, C375, C379, C408, C411, C414, and C418.

Belongs to the 4Fe4S bacterial-type ferredoxin family. RnfC subfamily. As to quaternary structure, the Rnf complex is probably composed of eight subunits, including RnfA, RnfB, RnfC, RnfD, RnfE and RnfG. The cofactor is [4Fe-4S] cluster.

The protein resides in the cell membrane. Part of a membrane-bound complex that couples electron transfer with translocation of ions across the membrane. Catalyzes Na(+) transport, most probably coupled to electron transfer from reduced ferredoxin to methanophenazine and heterodisulfide reductase. Involved in heterodisulfide reduction during methanogenesis from acetate. The chain is Ion-translocating oxidoreductase complex subunit C from Methanosarcina acetivorans (strain ATCC 35395 / DSM 2834 / JCM 12185 / C2A).